The following is a 251-amino-acid chain: Octanoyltransferase (251 aa).

Residues 56–237 (ADTGDEIWVV…RLIANLDGES (182 aa)) enclose the BPL/LPL catalytic domain. Residues 96-103 (RGGQITYH), 168-170 (ALG), and 181-183 (GLS) contribute to the substrate site. The Acyl-thioester intermediate role is filled by C199.

It belongs to the LipB family.

The protein localises to the cytoplasm. It catalyses the reaction octanoyl-[ACP] + L-lysyl-[protein] = N(6)-octanoyl-L-lysyl-[protein] + holo-[ACP] + H(+). The protein operates within protein modification; protein lipoylation via endogenous pathway; protein N(6)-(lipoyl)lysine from octanoyl-[acyl-carrier-protein]: step 1/2. Functionally, catalyzes the transfer of endogenously produced octanoic acid from octanoyl-acyl-carrier-protein onto the lipoyl domains of lipoate-dependent enzymes. Lipoyl-ACP can also act as a substrate although octanoyl-ACP is likely to be the physiological substrate. The sequence is that of Octanoyltransferase from Burkholderia ambifaria (strain ATCC BAA-244 / DSM 16087 / CCUG 44356 / LMG 19182 / AMMD) (Burkholderia cepacia (strain AMMD)).